Consider the following 641-residue polypeptide: Fibrinogen alpha-2 chain (641 aa).

The first 23 residues, 1–23, serve as a signal peptide directing secretion; it reads MTLRGVSMVLTWCLLVSKAWSSG. Residues 107-226 are a coiled coil; that stretch reads SVSDVSNQVV…IVHESFSVER (120 aa). The tract at residues 228–327 is disordered; it reads DARSLHPYSG…QKTEELSFKK (100 aa). A glycan (N-linked (GlcNAc...) asparagine) is linked at Asn-271. The segment covering 279–289 has biased composition (basic and acidic residues); it reads VDERSKVEKDV. Low complexity predominate over residues 293–317; it reads STSSVSSSSSSSSSSSSTSSTISST. Positions 395–636 constitute a Fibrinogen C-terminal domain; it reads RTNLSEYIDC…RTAVRFRRVQ (242 aa). Asn-397 carries an N-linked (GlcNAc...) asparagine glycan. A disulfide bridge links Cys-404 with Cys-435. N-linked (GlcNAc...) asparagine glycosylation occurs at Asn-458. A disulfide bond links Cys-571 and Cys-584.

Heterohexamer; disulfide linked. Contains 2 sets of 3 non-identical chains (alpha, beta and gamma). The 2 heterotrimers are in head to head conformation with the N-termini in a small central domain. Conversion of fibrinogen to fibrin is triggered by thrombin, which cleaves fibrinopeptides A and B from alpha and beta chains, and thus exposes the N-terminal polymerization sites responsible for the formation of the soft clot. The soft clot is converted into the hard clot by factor XIIIA which catalyzes the epsilon-(gamma-glutamyl)lysine cross-linking between gamma chains (stronger) and between alpha chains (weaker) of different monomers. Post-translationally, forms F13A-mediated cross-links between a glutamine and the epsilon-amino group of a lysine residue, forming fibronectin-fibrinogen heteropolymers.

Its subcellular location is the secreted. Its function is as follows. Fibrinogen has a double function: yielding monomers that polymerize into fibrin and acting as a cofactor in platelet aggregation. The protein is Fibrinogen alpha-2 chain of Petromyzon marinus (Sea lamprey).